The sequence spans 702 residues: Methionine--tRNA ligase (702 aa).

Positions 14–24 (PYANGPVHLGH) match the 'HIGH' region motif. Zn(2+)-binding residues include cysteine 146, cysteine 149, cysteine 159, and cysteine 162. The short motif at 344–348 (KFSKS) is the 'KMSKS' region element. An ATP-binding site is contributed by lysine 347. The tRNA-binding domain maps to 601–702 (DFLKVDLRVA…GDEINGQQIQ (102 aa)).

Belongs to the class-I aminoacyl-tRNA synthetase family. MetG type 1 subfamily. In terms of assembly, homodimer. Requires Zn(2+) as cofactor.

Its subcellular location is the cytoplasm. It carries out the reaction tRNA(Met) + L-methionine + ATP = L-methionyl-tRNA(Met) + AMP + diphosphate. Functionally, is required not only for elongation of protein synthesis but also for the initiation of all mRNA translation through initiator tRNA(fMet) aminoacylation. The chain is Methionine--tRNA ligase from Chlorobium limicola (strain DSM 245 / NBRC 103803 / 6330).